An 880-amino-acid chain; its full sequence is Leucine--tRNA ligase (880 aa).

The 'HIGH' region signature appears at 46–56 (PYPSGALHMGH). Residues 638–642 (KMSKS) carry the 'KMSKS' region motif. Lys-641 contacts ATP.

It belongs to the class-I aminoacyl-tRNA synthetase family.

It is found in the cytoplasm. It carries out the reaction tRNA(Leu) + L-leucine + ATP = L-leucyl-tRNA(Leu) + AMP + diphosphate. This chain is Leucine--tRNA ligase, found in Xanthomonas oryzae pv. oryzae (strain KACC10331 / KXO85).